The primary structure comprises 257 residues: High affinity immunoglobulin epsilon receptor subunit alpha (257 aa).

The first 25 residues, 1 to 25 (MAPAMESPTLLCVALLFFAPDGVLA), serve as a signal peptide directing secretion. The Extracellular segment spans residues 26-205 (VPQKPKVSLN…KAPREKYWLQ (180 aa)). 2 Ig-like domains span residues 30 to 110 (PKVS…EVFS) and 111 to 193 (DWLL…LNIT). N-linked (GlcNAc...) asparagine glycosylation is found at N46, N67, N75, N99, N160, N165, and N191. C51 and C93 are joined by a disulfide. C132 and C176 form a disulfide bridge. Residues 206-224 (FFIPLLVVILFAVDTGLFI) traverse the membrane as a helical segment. At 225-257 (STQQQVTFLLKIKRTRKGFRLLNPHPKPNPKNN) the chain is on the cytoplasmic side.

As to quaternary structure, tetramer of an alpha chain, a beta chain, and two disulfide linked gamma chains. Interacts with IGHE (via CH3 region). In terms of tissue distribution, expressed in eosinophils.

It is found in the cell membrane. High-affinity receptor for immunoglobulin epsilon/IgE. Mediates IgE effector functions in myeloid cells. Upon IgE binding and antigen/allergen cross-linking initiates signaling pathways that lead to myeloid cell activation and differentiation. On mast cells, basophils and eosinophils stimulates the secretion of vasoactive amines, lipid mediators and cytokines that contribute to inflammatory response, tissue remodeling and cytotoxicity against microbes. Triggers the immediate hypersensitivity response to allergens as a host defense mechanism against helminth parasites, pathogenic bacteria and venom toxicity. When dysregulated, it can elicit harmful life-threatening allergic and anaphylactic reactions. The polypeptide is High affinity immunoglobulin epsilon receptor subunit alpha (FCER1A) (Homo sapiens (Human)).